The following is a 282-amino-acid chain: MTITAGIDIGTGAVKTVLFRVEGDKTEWLAKRNDRIRQRDPFKLAEEAYNGLLEEAGLKASDVDYVATTGEGESLAFHTGHFYSMTTHARGAVYLNPEARAVLDIGALHGRAIRNDERGKVETYKMTSQCASGSGQFLENIARYLGIAQDEIGSLSTQADNPEVVSSICAVLAETDVINMVSRGISAPNILKGIHISMAGRLAKLLKSVGARDGVVLCTGGLALDEGLLKTLNESIQEQKMAVVAYNHPDSPYAGAIGAALWGAFRHEKLARLGQQQVAEAA.

Positions 130 and 169 each coordinate [4Fe-4S] cluster.

In terms of assembly, heterotetramer composed of A, B, C, and D subunits. Requires [4Fe-4S] cluster as cofactor.

The enzyme catalyses cyclohexa-1,5-diene-1-carbonyl-CoA + oxidized 2[4Fe-4S]-[ferredoxin] + 2 ADP + 2 phosphate = reduced 2[4Fe-4S]-[ferredoxin] + benzoyl-CoA + 2 ATP + 2 H2O. The catalysed reaction is 3-hydroxybenzoyl-CoA + AH2 + 2 ATP + 2 H2O = 3-hydroxycyclohexa-1,5-diene-1-carbonyl-CoA + A + 2 ADP + 2 phosphate + 2 H(+). Functionally, catalyzes the anaerobic reduction of benzoyl-CoA and 3-hydroxybenzoyl-CoA to form cyclohexa-1,5-diene-1-carbonyl-CoA and 3-hydroxycyclohexa-1,5-diene-1-carbonyl-CoA, respectively. The enzyme also reduces other benzoyl-CoA analogs with small substituents at the aromatic ring. The polypeptide is Benzoyl-CoA reductase subunit D (bcrD) (Thauera aromatica).